A 28-amino-acid polypeptide reads, in one-letter code: trp operon leader peptide (28 aa).

In terms of biological role, this protein is involved in control of the biosynthesis of tryptophan. This chain is trp operon leader peptide (trpL), found in Serratia marcescens.